Consider the following 554-residue polypeptide: NADH-quinone oxidoreductase subunit N 3 (554 aa).

Helical transmembrane passes span 35–55, 65–85, 105–125, 161–181, 187–207, 222–242, 275–295, 322–342, 345–365, 371–391, 398–418, 442–462, 476–496, and 525–545; these read LMPVLIIVVAAVLGILVEAFV, LFLTVVAVAGSFAAIVGLAAG, PTLFLQGTILLVAMVALFTFA, GFTTTEVFPLLLFSVAGLLVF, LLTLFIALEVFSLPLYLLCAV, YFLLGAFSSAFLLFGIALLYG, ALLLIGGAMILTGLLFKVGAV, VAAFGALLRLLYVALPGLAWD, PVMWAVAIVTMLGGAIVAITQ, LLAYSSIAHAGFILAGVIAAS, VLFYLLAYSFVTVGAFAVVTL, VAAVFAVFLLAFAGIPLTSGF, GAGALVVVGVLSSAVAAFFYI, and IAVGVAVTLVLGLAPQYFLDL.

The protein belongs to the complex I subunit 2 family. NDH-1 is composed of 14 different subunits. Subunits NuoA, H, J, K, L, M, N constitute the membrane sector of the complex.

The protein localises to the cell membrane. It catalyses the reaction a quinone + NADH + 5 H(+)(in) = a quinol + NAD(+) + 4 H(+)(out). Its function is as follows. NDH-1 shuttles electrons from NADH, via FMN and iron-sulfur (Fe-S) centers, to quinones in the respiratory chain. The immediate electron acceptor for the enzyme in this species is believed to be a menaquinone. Couples the redox reaction to proton translocation (for every two electrons transferred, four hydrogen ions are translocated across the cytoplasmic membrane), and thus conserves the redox energy in a proton gradient. In Streptomyces griseus subsp. griseus (strain JCM 4626 / CBS 651.72 / NBRC 13350 / KCC S-0626 / ISP 5235), this protein is NADH-quinone oxidoreductase subunit N 3.